Reading from the N-terminus, the 607-residue chain is Large ribosomal subunit assembly factor BipA (607 aa).

The 196-residue stretch at 3–198 folds into the tr-type G domain; it reads HSIRNIAIIA…SIIKYAPAPN (196 aa). Residues 15–20 and 128–131 each bind GTP; these read DHGKTT and NKID.

It belongs to the TRAFAC class translation factor GTPase superfamily. Classic translation factor GTPase family. BipA subfamily. In terms of assembly, monomer.

It localises to the cytoplasm. It catalyses the reaction GTP + H2O = GDP + phosphate + H(+). Functionally, a 50S ribosomal subunit assembly protein with GTPase activity, required for 50S subunit assembly at low temperatures, may also play a role in translation. Binds GTP and analogs. Binds the 70S ribosome between the 30S and 50S subunits, in a similar position as ribosome-bound EF-G; it contacts a number of ribosomal proteins, both rRNAs and the A-site tRNA. The protein is Large ribosomal subunit assembly factor BipA of Buchnera aphidicola subsp. Acyrthosiphon pisum (strain APS) (Acyrthosiphon pisum symbiotic bacterium).